A 95-amino-acid polypeptide reads, in one-letter code: Aspartyl/glutamyl-tRNA(Asn/Gln) amidotransferase subunit C (95 aa).

This sequence belongs to the GatC family. Heterotrimer of A, B and C subunits.

The catalysed reaction is L-glutamyl-tRNA(Gln) + L-glutamine + ATP + H2O = L-glutaminyl-tRNA(Gln) + L-glutamate + ADP + phosphate + H(+). It catalyses the reaction L-aspartyl-tRNA(Asn) + L-glutamine + ATP + H2O = L-asparaginyl-tRNA(Asn) + L-glutamate + ADP + phosphate + 2 H(+). In terms of biological role, allows the formation of correctly charged Asn-tRNA(Asn) or Gln-tRNA(Gln) through the transamidation of misacylated Asp-tRNA(Asn) or Glu-tRNA(Gln) in organisms which lack either or both of asparaginyl-tRNA or glutaminyl-tRNA synthetases. The reaction takes place in the presence of glutamine and ATP through an activated phospho-Asp-tRNA(Asn) or phospho-Glu-tRNA(Gln). The protein is Aspartyl/glutamyl-tRNA(Asn/Gln) amidotransferase subunit C of Cytophaga hutchinsonii (strain ATCC 33406 / DSM 1761 / CIP 103989 / NBRC 15051 / NCIMB 9469 / D465).